Here is an 892-residue protein sequence, read N- to C-terminus: Translation initiation factor IF-2 (892 aa).

Residues 165-175 show a composition bias toward basic and acidic residues; the sequence is EEQAELERQKT. Disordered stretches follow at residues 165–250 and 264–300; these read EEQA…EDDS and ERAR…AHGF. The segment covering 208–222 has biased composition (low complexity); that stretch reads PRAVRPAPAARPSVS. In terms of domain architecture, tr-type G spans 391 to 560; it reads PRPPVVTIMG…SIQAEVLELK (170 aa). Residues 400–407, 446–450, and 500–503 contribute to the GTP site; these read GHVDHGKT, DTPGH, and SKID.

The protein belongs to the TRAFAC class translation factor GTPase superfamily. Classic translation factor GTPase family. IF-2 subfamily.

The protein resides in the cytoplasm. In terms of biological role, one of the essential components for the initiation of protein synthesis. Protects formylmethionyl-tRNA from spontaneous hydrolysis and promotes its binding to the 30S ribosomal subunits. Also involved in the hydrolysis of GTP during the formation of the 70S ribosomal complex. The polypeptide is Translation initiation factor IF-2 (Xylella fastidiosa (strain 9a5c)).